Consider the following 312-residue polypeptide: Light-independent protochlorophyllide reductase iron-sulfur ATP-binding protein (312 aa).

Residues 55–60 (GIGKST) and K84 each bind ATP. S59 provides a ligand contact to Mg(2+). [4Fe-4S] cluster contacts are provided by C140 and C174. ATP contacts are provided by residues 225-226 (NR) and 249-251 (PDL).

It belongs to the NifH/BchL/ChlL family. Homodimer. Protochlorophyllide reductase is composed of three subunits; BchL, BchN and BchB. Requires [4Fe-4S] cluster as cofactor.

The enzyme catalyses chlorophyllide a + oxidized 2[4Fe-4S]-[ferredoxin] + 2 ADP + 2 phosphate = protochlorophyllide a + reduced 2[4Fe-4S]-[ferredoxin] + 2 ATP + 2 H2O. It functions in the pathway porphyrin-containing compound metabolism; bacteriochlorophyll biosynthesis (light-independent). Its function is as follows. Component of the dark-operative protochlorophyllide reductase (DPOR) that uses Mg-ATP and reduced ferredoxin to reduce ring D of protochlorophyllide (Pchlide) to form chlorophyllide a (Chlide). This reaction is light-independent. The L component serves as a unique electron donor to the NB-component of the complex, and binds Mg-ATP. The chain is Light-independent protochlorophyllide reductase iron-sulfur ATP-binding protein from Rhodopseudomonas palustris (strain HaA2).